Reading from the N-terminus, the 110-residue chain is UPF0102 protein Abu_0255 (110 aa).

Belongs to the UPF0102 family.

This is UPF0102 protein Abu_0255 from Aliarcobacter butzleri (strain RM4018) (Arcobacter butzleri).